We begin with the raw amino-acid sequence, 307 residues long: uncharacterized protein (307 aa).

Basic and acidic residues-rich tracts occupy residues 42 to 52 and 112 to 121; these read TCRSPGEDKCP and QKKEEPEGSH. Residues 42 to 153 form a disordered region; that stretch reads TCRSPGEDKC…VPPAVASASA (112 aa). Residues 129 to 139 show a composition bias toward basic residues; the sequence is KQHKKAKKRKS.

This is an uncharacterized protein from Mus musculus (Mouse).